The sequence spans 185 residues: Ribosome-recycling factor (185 aa).

The protein belongs to the RRF family.

The protein localises to the cytoplasm. Responsible for the release of ribosomes from messenger RNA at the termination of protein biosynthesis. May increase the efficiency of translation by recycling ribosomes from one round of translation to another. The protein is Ribosome-recycling factor of Bacillus pumilus (strain SAFR-032).